The chain runs to 215 residues: 24 kDa Ras-like protein (215 aa).

17-24 (GGGGVGKS) provides a ligand contact to GTP. Positions 39–47 (YDPTIEDSY) match the Effector region motif. GTP is bound by residues 64–68 (DTAGQ) and 123–126 (NKCD). Residues 179–199 (QTGRPAIAAGGGGPAGSYTQD) are disordered. A Cysteine methyl ester modification is found at Cys212. Cys212 carries the S-farnesyl cysteine lipid modification. The propeptide at 213–215 (VIA) is removed in mature form.

The protein belongs to the small GTPase superfamily. Ras family.

It is found in the cell membrane. The enzyme catalyses GTP + H2O = GDP + phosphate + H(+). Its function is as follows. Ras proteins bind GDP/GTP and possess intrinsic GTPase activity. The chain is 24 kDa Ras-like protein (CC-RAS) from Coprinopsis cinerea (strain Okayama-7 / 130 / ATCC MYA-4618 / FGSC 9003) (Inky cap fungus).